The chain runs to 559 residues: Protein GRAVITROPIC IN THE LIGHT 1 (559 aa).

The segment at 107–127 (AVNRREEYDTEEEENEEEGEI) is disordered. Acidic residues predominate over residues 114 to 127 (YDTEEEENEEEGEI).

In terms of biological role, required for red (R) and far red (FR) light-induced and phytochrome-mediated deregulation of negative gravitropism leading to randomization of hypocotyl growth orientation. This chain is Protein GRAVITROPIC IN THE LIGHT 1, found in Arabidopsis thaliana (Mouse-ear cress).